The primary structure comprises 275 residues: Large ribosomal subunit protein uL2 (275 aa).

Positions 216 to 275 (GIRPQTRGSAMNPIDHPHGGGEGKTNSGRHPVTPWGMPTKGYKTRKKKASDKLIISKRKK) are disordered. A compositionally biased stretch (basic residues) spans 257–275 (YKTRKKKASDKLIISKRKK).

Belongs to the universal ribosomal protein uL2 family. As to quaternary structure, part of the 50S ribosomal subunit. Forms a bridge to the 30S subunit in the 70S ribosome.

Its function is as follows. One of the primary rRNA binding proteins. Required for association of the 30S and 50S subunits to form the 70S ribosome, for tRNA binding and peptide bond formation. It has been suggested to have peptidyltransferase activity; this is somewhat controversial. Makes several contacts with the 16S rRNA in the 70S ribosome. This is Large ribosomal subunit protein uL2 from Aliarcobacter butzleri (strain RM4018) (Arcobacter butzleri).